The chain runs to 521 residues: Glucose-1-phosphate adenylyltransferase small subunit, chloroplastic (521 aa).

The tract at residues Met1–Asp24 is disordered. A chloroplast-targeting transit peptide spans Met1–Ala72.

It belongs to the bacterial/plant glucose-1-phosphate adenylyltransferase family. Heterotetramer.

It is found in the plastid. The protein localises to the chloroplast. It carries out the reaction alpha-D-glucose 1-phosphate + ATP + H(+) = ADP-alpha-D-glucose + diphosphate. Its pathway is glycan biosynthesis; starch biosynthesis. With respect to regulation, activated by 3'phosphoglycerate, inhibited by orthophosphate. Allosteric regulation. In terms of biological role, this protein plays a role in synthesis of starch. It catalyzes the synthesis of the activated glycosyl donor, ADP-glucose from Glc-1-P and ATP. The polypeptide is Glucose-1-phosphate adenylyltransferase small subunit, chloroplastic (Solanum lycopersicum (Tomato)).